Reading from the N-terminus, the 280-residue chain is MTPSAGLGLKSQHYGDAIACDAEGLWFEVHPENYMSAGGPRLAALEAVRARRPVSLHGVGLSLAADTDPDPEHLQALKRLVDRFDPFVVSEHLAWSTHRGAHHPDLLPFPRTRAALDRICGNVARMQDALQRRVLIENPSLYLPLKGHALDEVDFLEALATRTGCGLLVDVNNVFVSAQNLGYAPETYLDALPAHAIGEIHLAGHAPDPGGSNLLIDTHGAPVAEVVWTLYARLIARIGPRPTLIERDDDIPDFAALMAERNRAVAVLASGQTAREPAHV.

The protein belongs to the UPF0276 family.

This chain is UPF0276 protein CC_3255, found in Caulobacter vibrioides (strain ATCC 19089 / CIP 103742 / CB 15) (Caulobacter crescentus).